The chain runs to 103 residues: Large ribosomal subunit protein bL21 (103 aa).

This sequence belongs to the bacterial ribosomal protein bL21 family. In terms of assembly, part of the 50S ribosomal subunit. Contacts protein L20.

This protein binds to 23S rRNA in the presence of protein L20. This is Large ribosomal subunit protein bL21 from Clostridium acetobutylicum (strain ATCC 824 / DSM 792 / JCM 1419 / IAM 19013 / LMG 5710 / NBRC 13948 / NRRL B-527 / VKM B-1787 / 2291 / W).